The following is a 334-amino-acid chain: Protein-methionine-sulfoxide reductase catalytic subunit MsrP (334 aa).

A signal peptide (tat-type signal) is located at residues 1-44 (MKKIRPLTEADVTAESAFFMQRRQVLKALGISAAALSLPSTAQA). Mo-molybdopterin contacts are provided by residues Asn88, 91–92 (YE), Cys146, Thr181, Asn233, Arg238, and 249–251 (GIK).

The protein belongs to the MsrP family. In terms of assembly, heterodimer of a catalytic subunit (MsrP) and a heme-binding subunit (MsrQ). Mo-molybdopterin is required as a cofactor. Post-translationally, predicted to be exported by the Tat system. The position of the signal peptide cleavage has not been experimentally proven.

It is found in the periplasm. It carries out the reaction L-methionyl-[protein] + a quinone + H2O = L-methionyl-(S)-S-oxide-[protein] + a quinol. The enzyme catalyses L-methionyl-[protein] + a quinone + H2O = L-methionyl-(R)-S-oxide-[protein] + a quinol. Functionally, part of the MsrPQ system that repairs oxidized periplasmic proteins containing methionine sulfoxide residues (Met-O), using respiratory chain electrons. Thus protects these proteins from oxidative-stress damage caused by reactive species of oxygen and chlorine generated by the host defense mechanisms. MsrPQ is essential for the maintenance of envelope integrity under bleach stress, rescuing a wide series of structurally unrelated periplasmic proteins from methionine oxidation, including the primary periplasmic chaperone SurA and the lipoprotein Pal. The catalytic subunit MsrP is non-stereospecific, being able to reduce both (R-) and (S-) diastereoisomers of methionine sulfoxide. The sequence is that of Protein-methionine-sulfoxide reductase catalytic subunit MsrP from Salmonella newport (strain SL254).